The chain runs to 344 residues: N-acetyl-gamma-glutamyl-phosphate reductase (344 aa).

Cys-148 is an active-site residue.

This sequence belongs to the NAGSA dehydrogenase family. Type 1 subfamily.

The protein localises to the cytoplasm. It carries out the reaction N-acetyl-L-glutamate 5-semialdehyde + phosphate + NADP(+) = N-acetyl-L-glutamyl 5-phosphate + NADPH + H(+). It functions in the pathway amino-acid biosynthesis; L-arginine biosynthesis; N(2)-acetyl-L-ornithine from L-glutamate: step 3/4. Functionally, catalyzes the NADPH-dependent reduction of N-acetyl-5-glutamyl phosphate to yield N-acetyl-L-glutamate 5-semialdehyde. This is N-acetyl-gamma-glutamyl-phosphate reductase from Geobacillus kaustophilus (strain HTA426).